The following is a 574-amino-acid chain: Phosphate permease PHO89 (574 aa).

The Extracellular segment spans residues 1 to 5; that stretch reads MALHQ. A helical membrane pass occupies residues 6 to 26; that stretch reads FDYIFAIAMLFAFLDAFNIGA. The Cytoplasmic portion of the chain corresponds to 27 to 43; it reads NDVANSFASSISSRSLK. The chain crosses the membrane as a helical span at residues 44–64; the sequence is YWQAMVLAGLCEFLGAVLAGA. Residues 65–84 lie on the Extracellular side of the membrane; sequence RVSGTIKNNIIDSSIFTNDP. The helical transmembrane segment at 85–105 threads the bilayer; it reads AVLMLTMTSALIGSSCWLTFA. The Cytoplasmic portion of the chain corresponds to 106 to 117; that stretch reads TAIGMPVSTTHS. A helical membrane pass occupies residues 118 to 138; the sequence is IVGGTIGAGIAAGGANGVVWG. The Extracellular segment spans residues 139–145; that stretch reads WSGVSQI. Residues 146–166 traverse the membrane as a helical segment; sequence IASWFIAPILAGAIAAIVFSI. The Cytoplasmic portion of the chain corresponds to 167–184; it reads SRFSVLEVKSLERSIKNA. Residues 185–205 traverse the membrane as a helical segment; the sequence is LLLVGVLVFATFSILTMLIVW. At 206–222 the chain is on the extracellular side; the sequence is KGSPNLHLDDLSETETA. A helical membrane pass occupies residues 223-243; sequence VSIVLTGAIASIVYFIFFYPF. The Cytoplasmic segment spans residues 244–354; that stretch reads YRRKVLDQDW…SLLKQGPKKW (111 aa). Positions 301 to 332 are disordered; sequence EDEENKAASNSNDSVKNKEDIQEVDLVRTETE. Residues 315 to 332 are compositionally biased toward basic and acidic residues; that stretch reads VKNKEDIQEVDLVRTETE. Residues 355 to 375 form a helical membrane-spanning segment; the sequence is PLLFWLVISHGWTQDVIHAQV. Residues 376–398 are Extracellular-facing; it reads NDRDMLSGDLKGMYERSKFYDNR. The helical transmembrane segment at 399-419 threads the bilayer; the sequence is VEYIYSVLQAITAATMSFAHG. The Cytoplasmic portion of the chain corresponds to 420–447; it reads ANDVANATGPLSAVYVIWKTNTIGAKSE. A helical membrane pass occupies residues 448–468; sequence VPVWVLAYGGVALVIGCWTYG. Topologically, residues 469–503 are extracellular; it reads YNIIKNLGNKMILQSPSRGFSIELAVAITTVMATQ. The helical transmembrane segment at 504 to 524 threads the bilayer; sequence LGIPTSTTQIAVGGIVAVGLC. Topologically, residues 525–541 are cytoplasmic; sequence NKDLKSVNWRMVAWCYS. A helical membrane pass occupies residues 542–562; it reads GWFLTLPIAGLIAGIINGIIL. At 563 to 574 the chain is on the extracellular side; the sequence is NAPRFGVEYQMT.

It belongs to the inorganic phosphate transporter (PiT) (TC 2.A.20) family. In terms of assembly, forms homodimers and higher order homooligomers.

The protein localises to the cell membrane. The catalysed reaction is 2 Na(+)(out) + phosphate(out) = 2 Na(+)(in) + phosphate(in). Weakly stimulated by Li(+) and K(+). Inhibited by monensin. Inhibited by phosphonoacetic acid. Inhibited by methylphosphonate. Inhibited by dimethylphosphonate. Its function is as follows. Sodium-phosphate symporter. Active in early growth phase. The chain is Phosphate permease PHO89 (PHO89) from Saccharomyces cerevisiae (strain ATCC 204508 / S288c) (Baker's yeast).